Consider the following 521-residue polypeptide: Cytochrome b5 reductase 4 (521 aa).

Position 1 is an N-acetylmethionine (M1). Polar residues predominate over residues 1-18 (MLNVPSQSFPAPRSQQRV). The tract at residues 1–27 (MLNVPSQSFPAPRSQQRVASGGRSKVP) is disordered. Residues 54-130 (LIEVTEEELK…LKECLVGRMA (77 aa)) enclose the Cytochrome b5 heme-binding domain. Heme is bound by residues H89 and H112. The CS domain maps to 165–256 (PSYPSYDWFQ…KENTSWDFLG (92 aa)). Residues 273–385 (LYYRKCQLIS…SSPEGNFKIS (113 aa)) form the FAD-binding FR-type domain. Residues 365–380 (DRLQIGDFVSVSSPEG) and 392–424 (DLFLLAAGTGFTPMVKILNYALTDIPSLRKVKL) contribute to the FAD site.

Belongs to the flavoprotein pyridine nucleotide cytochrome reductase family. Requires FAD as cofactor. Widely expressed.

Its subcellular location is the endoplasmic reticulum. The catalysed reaction is 2 Fe(III)-[cytochrome b5] + NADH = 2 Fe(II)-[cytochrome b5] + NAD(+) + H(+). Functionally, NADH-cytochrome b5 reductase involved in endoplasmic reticulum stress response pathway. Plays a critical role in protecting pancreatic beta-cells against oxidant stress, possibly by protecting the cell from excess buildup of reactive oxygen species (ROS). Reduces a variety of substrates in vitro, such as cytochrome c, feericyanide and methemoglobin. This Homo sapiens (Human) protein is Cytochrome b5 reductase 4.